Consider the following 83-residue polypeptide: Small ribosomal subunit protein bS16 (83 aa).

The protein belongs to the bacterial ribosomal protein bS16 family.

The sequence is that of Small ribosomal subunit protein bS16 from Shewanella denitrificans (strain OS217 / ATCC BAA-1090 / DSM 15013).